Reading from the N-terminus, the 313-residue chain is Ribosomal RNA small subunit methyltransferase H (313 aa).

Residues 35–37, aspartate 55, phenylalanine 80, aspartate 102, and glutamine 109 each bind S-adenosyl-L-methionine; that span reads GGH.

The protein belongs to the methyltransferase superfamily. RsmH family.

The protein localises to the cytoplasm. It carries out the reaction cytidine(1402) in 16S rRNA + S-adenosyl-L-methionine = N(4)-methylcytidine(1402) in 16S rRNA + S-adenosyl-L-homocysteine + H(+). Specifically methylates the N4 position of cytidine in position 1402 (C1402) of 16S rRNA. This chain is Ribosomal RNA small subunit methyltransferase H, found in Shewanella amazonensis (strain ATCC BAA-1098 / SB2B).